A 257-amino-acid polypeptide reads, in one-letter code: S-methyl-5'-thioadenosine phosphorylase (257 aa).

Phosphate-binding positions include serine 10 and 50–51 (RH). Cysteine 130 and cysteine 195 are disulfide-bonded. Methionine 180 is a substrate binding site. Threonine 181 contacts phosphate. 204 to 206 (DYD) provides a ligand contact to substrate. A disulfide bond links cysteine 246 and cysteine 248.

Belongs to the PNP/MTAP phosphorylase family. MTAP subfamily. Homohexamer. Dimer of a homotrimer.

The enzyme catalyses S-methyl-5'-thioadenosine + phosphate = 5-(methylsulfanyl)-alpha-D-ribose 1-phosphate + adenine. It functions in the pathway amino-acid biosynthesis; L-methionine biosynthesis via salvage pathway; S-methyl-5-thio-alpha-D-ribose 1-phosphate from S-methyl-5'-thioadenosine (phosphorylase route): step 1/1. Functionally, catalyzes the reversible phosphorylation of S-methyl-5'-thioadenosine (MTA) to adenine and 5-methylthioribose-1-phosphate. Involved in the breakdown of MTA, a major by-product of polyamine biosynthesis. Responsible for the first step in the methionine salvage pathway after MTA has been generated from S-adenosylmethionine. Has broad substrate specificity with 6-aminopurine nucleosides as preferred substrates. The chain is S-methyl-5'-thioadenosine phosphorylase from Pyrococcus furiosus (strain ATCC 43587 / DSM 3638 / JCM 8422 / Vc1).